A 681-amino-acid polypeptide reads, in one-letter code: MDAIRKVYQYAEPNLSLVGWMGFIGFPIYYIVWEFMFPQPYENLPLRILCSVLFFGIIYRNRTPFEWRGFLPAYYQVVTTLCLPCFFFYMLLMNNWSNVWVMSFMSAIFLHILLVHITSVMFVQTFVGIGLATFFAWVAQGFHLELTMDWTHVPIFLFIYLFGNLFYFRNQVEHEAKVSIAKSFGAGIAHEMRNPLSGLLTSIDVIQSVLPNPKEGKKEQYTLSDEDVTLLREVSSDAMKIIHSGNETIDLLLTSIDENRVSRSTFKKHSAQSVVESAIESFSYKRSTDRFAISLDVRSEFDFLGSDTLLKYVMYNLFKNAFHHRSSEDFHIHVTMYSDEFANQIVVTDNGSGIAPEVLQSIFQDFYTTGKSGNYGLGLPFCKKVMRSFGGDIRCQSEVGEWSQFTMTFPTIGSSAVKEIKSELTKLKTILFVSEQNILVSKVTDIARFMRFELTVLDVPAVLKNKEYEFEFDLILIDMESLDASGSHIDKVESLLSFTEARIVYMFEHHPIQRARSVSFEPIWVETQAWLLNTRATIDRLLYDANYVVPSMPAKPLDSTNKRTIMVVDDNESLRKFTAMLLEKQGFEVIQTEDGLQAINALNENNVDLILMDIEMPVMDGVEASRQIRGSNKAYASVPIIAHTGDSSPITLDKIGSSGMSDFIVKPADKNRLFDKIANWI.

A run of 4 helical transmembrane segments spans residues 17–37 (LVGW…EFMF), 73–93 (AYYQ…MLLM), 112–132 (ILLV…IGLA), and 148–168 (MDWT…LFYF). The 227-residue stretch at 187-413 (GIAHEMRNPL…QFTMTFPTIG (227 aa)) folds into the Histidine kinase domain. His190 is subject to Phosphohistidine; by autocatalysis. Residues 564–681 (TIMVVDDNES…RLFDKIANWI (118 aa)) form the Response regulatory domain. The residue at position 613 (Asp613) is a 4-aspartylphosphate.

The protein localises to the cell membrane. The enzyme catalyses ATP + protein L-histidine = ADP + protein N-phospho-L-histidine.. Functionally, senses the quorum-sensing autoinducer CAI-1 ((S)-3-hydroxytridecan-4-one) which probably functions as an intragenus signal. The sensory signal is then relayed to LuxU and LuxO. In Vibrio campbellii (strain ATCC BAA-1116), this protein is CAI-1 autoinducer sensor kinase/phosphatase CqsS (cqsS).